A 158-amino-acid polypeptide reads, in one-letter code: Putative ribosomal RNA large subunit methyltransferase H (158 aa).

S-adenosyl-L-methionine is bound by residues Leu-76, Gly-107, and 126 to 131 (LSRMTF).

It belongs to the RNA methyltransferase RlmH family.

It is found in the cytoplasm. The catalysed reaction is pseudouridine(1915) in 23S rRNA + S-adenosyl-L-methionine = N(3)-methylpseudouridine(1915) in 23S rRNA + S-adenosyl-L-homocysteine + H(+). Its function is as follows. Specifically methylates the pseudouridine at position 1915 (m3Psi1915) in 23S rRNA. The polypeptide is Putative ribosomal RNA large subunit methyltransferase H (Methanocorpusculum labreanum (strain ATCC 43576 / DSM 4855 / Z)).